The sequence spans 471 residues: Intraflagellar transport protein 46 homolog (471 aa).

Disordered regions lie at residues 1 to 202 and 226 to 246; these read MSSE…SNMR and SRLE…EDDD. 2 stretches are compositionally biased toward acidic residues: residues 89–99 and 231–246; these read SEPQEVIDVND and DSSN…EDDD.

This sequence belongs to the IFT46 family. Component of the IFT complex B composed of at least che-2, che-13, dyf-1, dyf-3, dyf-6, dyf-11, dyf-13, ift-20, ift-74, ift-81, ifta-2, osm-1, osm-5 and osm-6. Expressed in the hypodermis and sensory neurons including inner labial, PDE, amphid and phasmid neurons.

It is found in the cell projection. Its subcellular location is the cilium. It localises to the cytoplasm. The protein resides in the cytoskeleton. The protein localises to the cilium basal body. It is found in the dendrite. Its subcellular location is the perikaryon. Component of the intraflagellar transport (IFT) complex B required for transport of proteins in the motile cilium. May be required for ciliary entrance and transport of specific ciliary cargo proteins such as che-3 which are related to motility. Required for normal morphology and function of ciliated amphid sensory neurons. This Caenorhabditis elegans protein is Intraflagellar transport protein 46 homolog.